We begin with the raw amino-acid sequence, 415 residues long: Nuclear hormone receptor family member nhr-153 (415 aa).

The nuclear receptor DNA-binding region spans 26–105 (PSVCQICRNP…AGMNPMAIQA (80 aa)). 2 consecutive NR C4-type zinc fingers follow at residues 29-49 (CQICRNPAIGYHYEVPSCNGC) and 65-88 (CFKVSNCLDGNDVIDTSKRVCRAC). The region spanning 170-406 (DQRDLSTALS…DPEVLKKKCI (237 aa)) is the NR LBD domain.

It belongs to the nuclear hormone receptor family.

It is found in the nucleus. Orphan nuclear receptor. In Caenorhabditis elegans, this protein is Nuclear hormone receptor family member nhr-153 (nhr-153).